A 116-amino-acid polypeptide reads, in one-letter code: Large ribosomal subunit protein bL20 (116 aa).

This sequence belongs to the bacterial ribosomal protein bL20 family.

Functionally, binds directly to 23S ribosomal RNA and is necessary for the in vitro assembly process of the 50S ribosomal subunit. It is not involved in the protein synthesizing functions of that subunit. This chain is Large ribosomal subunit protein bL20, found in Helicobacter pylori (strain G27).